A 295-amino-acid chain; its full sequence is Protease HtpX (295 aa).

A run of 2 helical transmembrane segments spans residues 4–24 and 42–62; these read ILLFLATNLAVVLIASITLSL and QLLVFCAVFGFAGSLFSLFIS. H147 provides a ligand contact to Zn(2+). E148 is a catalytic residue. H151 contacts Zn(2+). Transmembrane regions (helical) follow at residues 158-178 and 195-215; these read VTLALVQGVVNTFVMFFARII and IAYFVATIFAEVVLGFLASAI. E224 is a binding site for Zn(2+).

This sequence belongs to the peptidase M48B family. Zn(2+) is required as a cofactor.

It is found in the cell inner membrane. This Pseudomonas fluorescens (strain SBW25) protein is Protease HtpX.